A 564-amino-acid polypeptide reads, in one-letter code: Juvenile hormone esterase (564 aa).

Positions 1–19 (MTSHVLALAFLLHACTALA) are cleaved as a signal peptide. N-linked (GlcNAc...) asparagine glycosylation is present at Asn-81. Cysteines 89 and 109 form a disulfide. A glycan (N-linked (GlcNAc...) asparagine) is linked at Asn-180. Ser-220 functions as the Acyl-ester intermediate in the catalytic mechanism. The active-site Charge relay system is Glu-351. N-linked (GlcNAc...) asparagine glycosylation is present at Asn-402. His-465 serves as the catalytic Charge relay system. Asn-515 carries an N-linked (GlcNAc...) asparagine glycan.

It belongs to the type-B carboxylesterase/lipase family.

It carries out the reaction juvenile hormone I + H2O = juvenile hormone I carboxylate + methanol + H(+). The catalysed reaction is juvenile hormone III + H2O = juvenile hormone III carboxylate + methanol + H(+). In terms of biological role, JH esterase plays a crucial role in the decrease of JH activity in lepidopteran insects, by hydrolyzing the methyl ester of JH. It is also involved in the transport of JH. This is Juvenile hormone esterase from Heliothis virescens (Tobacco budworm moth).